The primary structure comprises 288 residues: Cyclic UMP-AMP synthase (288 aa).

Positions 1–23 are disordered; the sequence is MPVPESQLERWSHQGATTTAKKT. Residue Q46 participates in UTP binding. 46–48 lines the ATP pocket; the sequence is QGS. Residues D60 and D62 each contribute to the Mg(2+) site. UTP-binding positions include D62 and 116–120; that span reads RKTLK. D129 contacts Mg(2+). N166 lines the UTP pocket. 3 residues coordinate ATP: K194, S212, and E265.

It belongs to the CD-NTase family. E01 subfamily. The cofactor is Mg(2+).

The catalysed reaction is UTP + ATP = 3',3'-cUAMP + 2 diphosphate. Functionally, cyclic nucleotide synthase (second messenger synthase) of a CBASS antivirus system. CBASS (cyclic oligonucleotide-based antiphage signaling system) provides immunity against bacteriophage. The CD-NTase protein synthesizes cyclic nucleotides in response to infection; these serve as specific second messenger signals. The signals activate a diverse range of effectors, leading to bacterial cell death and thus abortive phage infection. A type I-B(UU) CBASS system. In terms of biological role, cyclic dinucleotide synthase that catalyzes the synthesis of 3'3'-cyclic UMP-AMP (cUMP-AMP) from UTP and ATP, a second messenger for cell signal transduction. This Rhodothermus marinus (strain SG0.5JP17-172) protein is Cyclic UMP-AMP synthase.